The chain runs to 913 residues: DNA mismatch repair protein MutS (913 aa).

G720–S727 lines the ATP pocket.

Belongs to the DNA mismatch repair MutS family.

This protein is involved in the repair of mismatches in DNA. It is possible that it carries out the mismatch recognition step. This protein has a weak ATPase activity. This chain is DNA mismatch repair protein MutS, found in Prochlorococcus marinus (strain AS9601).